We begin with the raw amino-acid sequence, 450 residues long: Thiamine biosynthesis regulatory protein (450 aa).

A compositionally biased stretch (basic residues) spans 1-12 (MVNSKRQQRSKK). The tract at residues 1 to 23 (MVNSKRQQRSKKVASSSKVPPTK) is disordered. Residues 13–23 (VASSSKVPPTK) are compositionally biased toward low complexity. Positions 30-57 (CWACRFKKRRCDENRPICSLCAKHGDNC) form a DNA-binding region, zn(2)-C6 fungal-type. The tract at residues 210–234 (TDQLPSPGHSMSSAEETTTAALSSP) is disordered.

The protein localises to the nucleus. Positive regulator of thiamine biosynthesis. This chain is Thiamine biosynthesis regulatory protein (THI2), found in Saccharomyces cerevisiae (strain ATCC 204508 / S288c) (Baker's yeast).